The following is a 432-amino-acid chain: Adenylosuccinate synthetase (432 aa).

Residues 13-19 and 41-43 each bind GTP; these read GDEGKGK and GHT. Asp-14 acts as the Proton acceptor in catalysis. Mg(2+) contacts are provided by Asp-14 and Gly-41. Residues 14–17, 39–42, Thr-130, Arg-144, Gln-225, Thr-240, and Arg-304 each bind IMP; these read DEGK and NAGH. His-42 acts as the Proton donor in catalysis. 300–306 contacts substrate; that stretch reads ATTGRSR. Residues Arg-306, 332–334, and 415–417 contribute to the GTP site; these read KLD and STG.

The protein belongs to the adenylosuccinate synthetase family. As to quaternary structure, homodimer. Mg(2+) is required as a cofactor.

It localises to the cytoplasm. It catalyses the reaction IMP + L-aspartate + GTP = N(6)-(1,2-dicarboxyethyl)-AMP + GDP + phosphate + 2 H(+). The protein operates within purine metabolism; AMP biosynthesis via de novo pathway; AMP from IMP: step 1/2. In terms of biological role, plays an important role in the de novo pathway of purine nucleotide biosynthesis. Catalyzes the first committed step in the biosynthesis of AMP from IMP. This is Adenylosuccinate synthetase from Yersinia pseudotuberculosis serotype O:1b (strain IP 31758).